Consider the following 199-residue polypeptide: ATP-dependent Clp protease proteolytic subunit (199 aa).

S97 serves as the catalytic Nucleophile. The active site involves H122.

This sequence belongs to the peptidase S14 family. Fourteen ClpP subunits assemble into 2 heptameric rings which stack back to back to give a disk-like structure with a central cavity, resembling the structure of eukaryotic proteasomes.

The protein localises to the cytoplasm. It carries out the reaction Hydrolysis of proteins to small peptides in the presence of ATP and magnesium. alpha-casein is the usual test substrate. In the absence of ATP, only oligopeptides shorter than five residues are hydrolyzed (such as succinyl-Leu-Tyr-|-NHMec, and Leu-Tyr-Leu-|-Tyr-Trp, in which cleavage of the -Tyr-|-Leu- and -Tyr-|-Trp bonds also occurs).. Its function is as follows. Cleaves peptides in various proteins in a process that requires ATP hydrolysis. Has a chymotrypsin-like activity. Plays a major role in the degradation of misfolded proteins. This chain is ATP-dependent Clp protease proteolytic subunit, found in Geobacter metallireducens (strain ATCC 53774 / DSM 7210 / GS-15).